A 97-amino-acid chain; its full sequence is uncharacterized protein (97 aa).

This is an uncharacterized protein from Emericella nidulans (Aspergillus nidulans).